A 294-amino-acid chain; its full sequence is Protoheme IX farnesyltransferase (294 aa).

Transmembrane regions (helical) follow at residues 19-39 (PKQT…AGGM), 41-61 (LDAL…TTSV), 89-109 (VEAL…SYLI), 111-131 (PWTA…YTMW), 138-158 (LSII…WAAA), 166-186 (AIMI…YISI), 218-238 (VLMI…PIFL), and 272-292 (SPVE…RILW).

The protein belongs to the UbiA prenyltransferase family. Protoheme IX farnesyltransferase subfamily.

It localises to the cell membrane. The enzyme catalyses heme b + (2E,6E)-farnesyl diphosphate + H2O = Fe(II)-heme o + diphosphate. Its pathway is porphyrin-containing compound metabolism; heme O biosynthesis; heme O from protoheme: step 1/1. Its function is as follows. Converts heme B (protoheme IX) to heme O by substitution of the vinyl group on carbon 2 of heme B porphyrin ring with a hydroxyethyl farnesyl side group. The polypeptide is Protoheme IX farnesyltransferase (Korarchaeum cryptofilum (strain OPF8)).